The primary structure comprises 129 residues: Histone H3-like centromeric protein A (129 aa).

The span at 1–14 (MGPRRKPRTPRRRP) shows a compositional bias: basic residues. The interval 1–30 (MGPRRKPRTPRRRPSSPVPGPSRRSSRPGK) is disordered. Glycine 2 is subject to N,N,N-trimethylglycine. Phosphoserine occurs at positions 16, 22, and 57. Positions 30–129 (KRRKFLWLKE…RIRGIEGGLG (100 aa)) are H3-like. Positions 64 to 105 (CGKFTRGVDLCWQAQALLALQEAAEAFLVHLFEDAYLLTLHA) are CATD.

The protein belongs to the histone H3 family. As to quaternary structure, component of centromeric nucleosomes, where DNA is wrapped around a histone octamer core. The octamer contains two molecules each of H2A, H2B, CENPA and H4 assembled in one CENPA-H4 heterotetramer and two H2A-H2B heterodimers. CENPA modulates the DNA-binding characteristics of nucleosomes so that protruding DNA ends have higher flexibility than in nucleosomes containing conventional histone H3. Inhibits binding of histone H1 to nucleosomes, since histone H1 binds preferentially to rigid DNA linkers that protrude from nucleosomes. Nucleosomes containing CENPA also contain histone H2A variants such as MACROH2A and H2A.Z/H2AZ1. The CENPA-H4 heterotetramer is more compact and structurally more rigid than corresponding H3-H4 heterotetramers. Can assemble into nucleosomes that contain both CENPA and histone H3.3; these nucleosomes interact with a single CENPC chain. Heterotrimer composed of HJURP, CENPA and histone H4, where HJURP interacts with the dimer formed by CENPA and histone H4 and prevents tetramerization of CENPA and H4. Component of the CENPA-NAC complex, at least composed of CENPA, CENPC, CENPH, CENPM, CENPN, CENPT and CENPU. Interacts (via CATD domain) with HJURP; the interaction is direct and is required for its localization to centromeres. Interacts with CENPC, CENPN and CENPT; interaction is direct. Part of a centromere complex consisting of CENPA, CENPT and CENPW. Identified in centromere complexes containing histones H2A, H2B and H4, and at least CENPA, CENPB, CENPC, CENPT, CENPN, HJURP, SUPT16H, SSRP1 and RSF1. Can self-associate. The CENPA-H4 heterotetramer can bind DNA by itself (in vitro). Interacts with CDK1, PPP1CA and RBBP7. In terms of processing, trimethylated by NTMT1 at the N-terminal glycine after cleavage of Met-1. Methylation is low before incorporation into nucleosomes and increases with cell cycle progression, with the highest levels in mitotic nucleosomes. Post-translationally, phosphorylated by CDK1 at Ser-57 during early mitosis; this abolishes association with chromatin and centromeres, prevents interaction with HJURP and thereby prevents premature assembly of CENPA into centromeres. Dephosphorylated at Ser-57 by PPP1CA during late mitosis. Poly-ADP-ribosylated by PARP1.

The protein localises to the nucleus. The protein resides in the chromosome. It is found in the centromere. In terms of biological role, histone H3-like nucleosomal protein that is specifically found in centromeric nucleosomes. Replaces conventional H3 in the nucleosome core of centromeric chromatin that serves as an assembly site for the inner kinetochore. The presence of CENPA subtly modifies the nucleosome structure and the way DNA is wrapped around the nucleosome and gives rise to protruding DNA ends that are less well-ordered and rigid compared to nucleosomes containing histone H3. May serve as an epigenetic mark that propagates centromere identity through replication and cell division. Required for recruitment and assembly of kinetochore proteins, and as a consequence required for progress through mitosis, chromosome segregation and cytokinesis. The sequence is that of Histone H3-like centromeric protein A (CENPA) from Cricetulus griseus (Chinese hamster).